We begin with the raw amino-acid sequence, 141 residues long: Flagellar assembly factor FliW (141 aa).

It belongs to the FliW family. Interacts with translational regulator CsrA and flagellin(s).

The protein localises to the cytoplasm. Acts as an anti-CsrA protein, binds CsrA and prevents it from repressing translation of its target genes, one of which is flagellin. Binds to flagellin and participates in the assembly of the flagellum. The protein is Flagellar assembly factor FliW of Clostridium botulinum (strain Alaska E43 / Type E3).